Consider the following 288-residue polypeptide: Bifunctional protein FolD (288 aa).

NADP(+) contacts are provided by residues 166-168 (GAS) and Ile-232.

Belongs to the tetrahydrofolate dehydrogenase/cyclohydrolase family. As to quaternary structure, homodimer.

The catalysed reaction is (6R)-5,10-methylene-5,6,7,8-tetrahydrofolate + NADP(+) = (6R)-5,10-methenyltetrahydrofolate + NADPH. The enzyme catalyses (6R)-5,10-methenyltetrahydrofolate + H2O = (6R)-10-formyltetrahydrofolate + H(+). It participates in one-carbon metabolism; tetrahydrofolate interconversion. In terms of biological role, catalyzes the oxidation of 5,10-methylenetetrahydrofolate to 5,10-methenyltetrahydrofolate and then the hydrolysis of 5,10-methenyltetrahydrofolate to 10-formyltetrahydrofolate. The protein is Bifunctional protein FolD of Acidithiobacillus ferrooxidans (strain ATCC 23270 / DSM 14882 / CIP 104768 / NCIMB 8455) (Ferrobacillus ferrooxidans (strain ATCC 23270)).